A 1589-amino-acid polypeptide reads, in one-letter code: Pentafunctional AROM polypeptide (1589 aa).

Residues 1–384 (MAAPTTIKIL…HEQQASVVSN (384 aa)) are 3-dehydroquinate synthase. NAD(+) contacts are provided by residues 44–46 (DTT), 81–84 (ELSK), 114–116 (GGV), and aspartate 119. A 7-phospho-2-dehydro-3-deoxy-D-arabino-heptonate-binding site is contributed by arginine 130. 139 to 140 (TT) is a binding site for NAD(+). Residues aspartate 146 and lysine 152 each contribute to the 7-phospho-2-dehydro-3-deoxy-D-arabino-heptonate site. Residue lysine 161 coordinates NAD(+). Position 162 (asparagine 162) interacts with 7-phospho-2-dehydro-3-deoxy-D-arabino-heptonate. NAD(+) is bound by residues 179-182 (FLNT) and asparagine 190. Glutamate 194 contacts Zn(2+). 7-phospho-2-dehydro-3-deoxy-D-arabino-heptonate contacts are provided by residues 194–197 (EVIK) and lysine 250. Glutamate 260 serves as the catalytic Proton acceptor; for 3-dehydroquinate synthase activity. 7-phospho-2-dehydro-3-deoxy-D-arabino-heptonate-binding positions include 264-268 (RNLLN) and histidine 271. Residue histidine 271 coordinates Zn(2+). The active-site Proton acceptor; for 3-dehydroquinate synthase activity is histidine 275. Residues histidine 287 and lysine 356 each coordinate 7-phospho-2-dehydro-3-deoxy-D-arabino-heptonate. Histidine 287 contributes to the Zn(2+) binding site. The interval 397 to 841 (VSPGVPKSLQ…WDTLAQLFKA (445 aa)) is EPSP synthase. Cysteine 823 (for EPSP synthase activity) is an active-site residue. Positions 861–1052 (ASIFIIGMRG…KKKPQSFFVS (192 aa)) are shikimate kinase. 867–874 (GMRGAGKT) is a binding site for ATP. The 3-dehydroquinase stretch occupies residues 1053 to 1273 (LTLPDLRPSA…AAPGQLSAQD (221 aa)). Catalysis depends on histidine 1176, which acts as the Proton acceptor; for 3-dehydroquinate dehydratase activity. The Schiff-base intermediate with substrate; for 3-dehydroquinate dehydratase activity role is filled by lysine 1204. The shikimate dehydrogenase stretch occupies residues 1286 to 1589 (PRKFAIFGKP…VMNPGTDNRG (304 aa)).

The protein in the N-terminal section; belongs to the sugar phosphate cyclases superfamily. Dehydroquinate synthase family. It in the 2nd section; belongs to the EPSP synthase family. This sequence in the 3rd section; belongs to the shikimate kinase family. In the 4th section; belongs to the type-I 3-dehydroquinase family. The protein in the C-terminal section; belongs to the shikimate dehydrogenase family. As to quaternary structure, homodimer. The cofactor is Zn(2+).

It is found in the cytoplasm. It catalyses the reaction 7-phospho-2-dehydro-3-deoxy-D-arabino-heptonate = 3-dehydroquinate + phosphate. It carries out the reaction 3-dehydroquinate = 3-dehydroshikimate + H2O. The catalysed reaction is shikimate + NADP(+) = 3-dehydroshikimate + NADPH + H(+). The enzyme catalyses shikimate + ATP = 3-phosphoshikimate + ADP + H(+). It catalyses the reaction 3-phosphoshikimate + phosphoenolpyruvate = 5-O-(1-carboxyvinyl)-3-phosphoshikimate + phosphate. It functions in the pathway metabolic intermediate biosynthesis; chorismate biosynthesis; chorismate from D-erythrose 4-phosphate and phosphoenolpyruvate: step 2/7. The protein operates within metabolic intermediate biosynthesis; chorismate biosynthesis; chorismate from D-erythrose 4-phosphate and phosphoenolpyruvate: step 3/7. Its pathway is metabolic intermediate biosynthesis; chorismate biosynthesis; chorismate from D-erythrose 4-phosphate and phosphoenolpyruvate: step 4/7. It participates in metabolic intermediate biosynthesis; chorismate biosynthesis; chorismate from D-erythrose 4-phosphate and phosphoenolpyruvate: step 5/7. It functions in the pathway metabolic intermediate biosynthesis; chorismate biosynthesis; chorismate from D-erythrose 4-phosphate and phosphoenolpyruvate: step 6/7. Functionally, the AROM polypeptide catalyzes 5 consecutive enzymatic reactions in prechorismate polyaromatic amino acid biosynthesis. This Coccidioides posadasii (strain C735) (Valley fever fungus) protein is Pentafunctional AROM polypeptide.